The sequence spans 415 residues: rRNA methyltransferase 3, mitochondrial (415 aa).

The transit peptide at 1–47 directs the protein to the mitochondrion; the sequence is MAALCRGTVRACILKPLGLSVSLQVKRNVRALRRTPVRVLPAAEKGR. A disordered region spans residues 41–73; the sequence is PAAEKGRERKEVEARRPQQPRQSEYQTRTSQGV. Residues 44–56 show a composition bias toward basic and acidic residues; the sequence is EKGRERKEVEARR. Polar residues predominate over residues 59 to 73; it reads QPRQSEYQTRTSQGV. Residues G357, I381, and L390 each contribute to the S-adenosyl-L-methionine site.

The protein belongs to the class IV-like SAM-binding methyltransferase superfamily. RNA methyltransferase TrmH family.

The protein resides in the mitochondrion. The catalysed reaction is a uridine in rRNA + S-adenosyl-L-methionine = a 2'-O-methyluridine in rRNA + S-adenosyl-L-homocysteine + H(+). S-adenosyl-L-methionine-dependent 2'-O-ribose methyltransferase that catalyzes the formation of 2'-O-methylguanosine at position 1370 (Gm1370) in the mitochondrial large subunit ribosomal RNA (mtLSU rRNA), a conserved modification in the peptidyl transferase domain of the mtLSU rRNA. Also required for formation of 2'-O-methyluridine at position 1369 (Um1369) mediated by MRM2. The sequence is that of rRNA methyltransferase 3, mitochondrial from Xenopus tropicalis (Western clawed frog).